We begin with the raw amino-acid sequence, 259 residues long: Type III pantothenate kinase (259 aa).

Residue 6-13 (DVGNTNCT) coordinates ATP. 107–110 (GSDR) provides a ligand contact to substrate. Asp-109 (proton acceptor) is an active-site residue. Asp-129 contributes to the K(+) binding site. Thr-132 serves as a coordination point for ATP. Substrate is bound at residue Thr-184.

This sequence belongs to the type III pantothenate kinase family. As to quaternary structure, homodimer. NH4(+) serves as cofactor. K(+) is required as a cofactor.

Its subcellular location is the cytoplasm. It catalyses the reaction (R)-pantothenate + ATP = (R)-4'-phosphopantothenate + ADP + H(+). Its pathway is cofactor biosynthesis; coenzyme A biosynthesis; CoA from (R)-pantothenate: step 1/5. Its function is as follows. Catalyzes the phosphorylation of pantothenate (Pan), the first step in CoA biosynthesis. This is Type III pantothenate kinase from Listeria monocytogenes serotype 4b (strain CLIP80459).